A 332-amino-acid polypeptide reads, in one-letter code: Adenosine receptor A2b (332 aa).

Over 1–8 the chain is Extracellular; the sequence is MQLETQDA. Residues 9–33 traverse the membrane as a helical segment; that stretch reads LYVALELAIAALSVAGNVLVCAAVG. Residues 34–43 are Cytoplasmic-facing; that stretch reads TSSALQTPTN. A helical transmembrane segment spans residues 44–67; that stretch reads YFLVSLAAADVAVGLFAIPFAITI. Over 68 to 78 the chain is Extracellular; it reads SLGFCTDFHSC. C78 and C170 are disulfide-bonded. A helical transmembrane segment spans residues 79–101; the sequence is LFLACFVLVLTQSSIFSLLAVAV. The Cytoplasmic portion of the chain corresponds to 102–121; sequence DRYLAIRVPLRYKSLVTGTR. Residues 122–144 traverse the membrane as a helical segment; sequence ARGVIAVLWVLAFGIGLTPFLGW. The Extracellular segment spans residues 145–177; the sequence is NSKDSATNCTEPWDGTTNESCCLVKCLFENVVP. N-linked (GlcNAc...) asparagine glycosylation is found at N152 and N162. E173 is an adenosine binding site. A helical membrane pass occupies residues 178 to 202; that stretch reads MSYMVYFNFFGCVLPPLLIMLVIYI. At 203–234 the chain is on the cytoplasmic side; sequence KIFMVACKQLQRTELVDHSRTVIQREIHAAKS. Residues 235–258 form a helical membrane-spanning segment; it reads LAMIVGIFALCWLPVHAINCVTLF. Position 253 (N253) interacts with adenosine. At 259–266 the chain is on the extracellular side; the sequence is QPARAKDK. A helical membrane pass occupies residues 267-290; it reads PKWAMNMAILLSHASSVVNPIVYA. Positions 278 and 279 each coordinate adenosine. The Cytoplasmic segment spans residues 291–332; it reads YRNRDFRYTFHKIISRYVLCQTDVLKSGNGQAGTQSALDVGL. The S-palmitoyl cysteine moiety is linked to residue C310.

Belongs to the G-protein coupled receptor 1 family.

Its subcellular location is the cell membrane. In terms of biological role, receptor for adenosine. The activity of this receptor is mediated by G proteins which activate adenylyl cyclase. In Canis lupus familiaris (Dog), this protein is Adenosine receptor A2b (ADORA2B).